We begin with the raw amino-acid sequence, 882 residues long: Phosphoprotein p93 (882 aa).

The disordered stretch occupies residues Ser-250–Ser-297. Residues Gln-266–Ser-297 are compositionally biased toward polar residues. Phosphothreonine; by CDC2 is present on Thr-279. A phosphoserine; by CDC2 mark is found at Ser-293, Ser-300, Ser-551, Ser-556, and Ser-590. Disordered stretches follow at residues Val-562 to Glu-678 and Glu-809 to Arg-833. 2 stretches are compositionally biased toward low complexity: residues Ser-579–Ser-601 and Ala-609–Ser-640. The residue at position 649 (Ser-649) is a Phosphoserine. Thr-650 carries the phosphothreonine modification. Positions Gly-819–Thr-832 are enriched in polar residues.

It localises to the cytoplasm. The protein resides in the cytoskeleton. Its subcellular location is the microtubule organizing center. The protein localises to the spindle pole body. It is found in the spindle. Functionally, has a role in sister chromatid separation. This is Phosphoprotein p93 (dis1) from Schizosaccharomyces pombe (strain 972 / ATCC 24843) (Fission yeast).